Consider the following 568-residue polypeptide: 2-succinyl-5-enolpyruvyl-6-hydroxy-3-cyclohexene-1-carboxylate synthase (568 aa).

The protein belongs to the TPP enzyme family. MenD subfamily. Homodimer. Mg(2+) serves as cofactor. The cofactor is Mn(2+). Requires thiamine diphosphate as cofactor.

It catalyses the reaction isochorismate + 2-oxoglutarate + H(+) = 5-enolpyruvoyl-6-hydroxy-2-succinyl-cyclohex-3-ene-1-carboxylate + CO2. It functions in the pathway quinol/quinone metabolism; 1,4-dihydroxy-2-naphthoate biosynthesis; 1,4-dihydroxy-2-naphthoate from chorismate: step 2/7. The protein operates within quinol/quinone metabolism; menaquinone biosynthesis. Its function is as follows. Catalyzes the thiamine diphosphate-dependent decarboxylation of 2-oxoglutarate and the subsequent addition of the resulting succinic semialdehyde-thiamine pyrophosphate anion to isochorismate to yield 2-succinyl-5-enolpyruvyl-6-hydroxy-3-cyclohexene-1-carboxylate (SEPHCHC). This chain is 2-succinyl-5-enolpyruvyl-6-hydroxy-3-cyclohexene-1-carboxylate synthase, found in Actinobacillus pleuropneumoniae serotype 3 (strain JL03).